Here is a 158-residue protein sequence, read N- to C-terminus: MAAQGVGPGPGSAAPPGLEAARQKLALRRKKVLSTEEMELYELAQAAGGGIDPDVFKILVDLLKLNVAPLAVFQMLKSMCAGQRLASEPQDPAAVSLPTSSVPETRGRDKGSAALGGVLALAERSNHEGSSQRMPRQPSATRLPKGGGPGKSPTQGST.

A Phosphoserine modification is found at S34. Positions 84-158 are disordered; it reads RLASEPQDPA…PGKSPTQGST (75 aa). A compositionally biased stretch (low complexity) spans 112–122; the sequence is SAALGGVLALA. Polar residues predominate over residues 128–140; sequence EGSSQRMPRQPSA. S152 carries the post-translational modification Phosphoserine.

Belongs to the MOZART2 family. As to quaternary structure, associates with the gamma-tubulin ring complex (gTuRC) consisting of TUBGCP2, TUBGCP3, TUBGCP4, TUBGCP5 and TUBGCP6 and gamma-tubulin TUBG1 or TUBG2; within the complex, interacts with TUBGCP2; the interaction plays a role in gTuRC activation.

The protein resides in the cytoplasm. Its subcellular location is the cytoskeleton. It is found in the microtubule organizing center. The protein localises to the centrosome. It localises to the spindle. In terms of biological role, required for the recruitment and the assembly of the gamma-tubulin ring complex (gTuRC) at the centrosome. The gTuRC regulates the minus-end nucleation of alpha-beta tubulin heterodimers that grow into microtubule protafilaments, a critical step in centrosome duplication and spindle formation. This chain is Mitotic-spindle organizing protein 2A (MZT2A), found in Homo sapiens (Human).